The chain runs to 268 residues: Endonuclease 8 1 (268 aa).

Pro-2 (schiff-base intermediate with DNA) is an active-site residue. Glu-3 serves as the catalytic Proton donor. The active-site Proton donor; for beta-elimination activity is Lys-52. DNA is bound by residues Arg-125 and Asn-166. Residues 234 to 268 (YVYRRAGEPCRVCGGVIRTALLEGRNVFWCPVCQT) form an FPG-type zinc finger. The active-site Proton donor; for delta-elimination activity is the Arg-258.

The protein belongs to the FPG family. Zn(2+) serves as cofactor.

It catalyses the reaction 2'-deoxyribonucleotide-(2'-deoxyribose 5'-phosphate)-2'-deoxyribonucleotide-DNA = a 3'-end 2'-deoxyribonucleotide-(2,3-dehydro-2,3-deoxyribose 5'-phosphate)-DNA + a 5'-end 5'-phospho-2'-deoxyribonucleoside-DNA + H(+). In terms of biological role, involved in base excision repair of DNA damaged by oxidation or by mutagenic agents. Acts as a DNA glycosylase that recognizes and removes damaged bases. Has AP (apurinic/apyrimidinic) lyase activity and introduces nicks in the DNA strand. Cleaves the DNA backbone by beta-delta elimination to generate a single-strand break at the site of the removed base with both 3'- and 5'-phosphates. This chain is Endonuclease 8 1 (nei1), found in Mycobacterium bovis (strain ATCC BAA-935 / AF2122/97).